We begin with the raw amino-acid sequence, 237 residues long: Nodulation protein NolA (237 aa).

Residues 10–79 (RWRIGELAEA…LVEIRKAMEG (70 aa)) form the HTH merR-type domain. Residues 13–32 (IGELAEATGVTVRTLHHYEH) constitute a DNA-binding region (H-T-H motif).

Its function is as follows. Involved in genotype-specific nodulation of soybeans. This Bradyrhizobium diazoefficiens (strain JCM 10833 / BCRC 13528 / IAM 13628 / NBRC 14792 / USDA 110) protein is Nodulation protein NolA (nolA).